The chain runs to 127 residues: Small ribosomal subunit protein uS11 (127 aa).

The protein belongs to the universal ribosomal protein uS11 family. As to quaternary structure, part of the 30S ribosomal subunit. Interacts with proteins S7 and S18. Binds to IF-3.

Functionally, located on the platform of the 30S subunit, it bridges several disparate RNA helices of the 16S rRNA. Forms part of the Shine-Dalgarno cleft in the 70S ribosome. This Flavobacterium psychrophilum (strain ATCC 49511 / DSM 21280 / CIP 103535 / JIP02/86) protein is Small ribosomal subunit protein uS11.